The primary structure comprises 287 residues: RxLR effector protein Avr4 (287 aa).

Positions 1-24 (MRSLHILLVFTASLLASLTESAKA) are cleaved as a signal peptide. The short motif at 42-55 (RFLRAQTDEKNEER) is the RxLR-dEER element. A W1 motif region spans residues 115 to 138 (KYERMQWQKLKEGETLTFMRLGDR). The tract at residues 148–171 (QLLRWVAQKKPVESVYDDLQVAGF) is W2 motif. The W3 motif stretch occupies residues 221 to 244 (LFEKWAMEGTHIKSVITTLKLNGK). Positions 246 to 267 (ASEMANNENFPALLKYVKLYLD) are y motif.

The protein belongs to the RxLR effector family.

The protein localises to the secreted. Its subcellular location is the host cytoplasm. It localises to the host nucleus. The protein resides in the host nucleolus. It is found in the host cytoskeleton. Secreted effector that acts as an elicitor of hypersensitive response (HR) specifically on plants carrying defense protein R4, through its interaction with this protein. This chain is RxLR effector protein Avr4, found in Phytophthora infestans (strain T30-4) (Potato late blight agent).